We begin with the raw amino-acid sequence, 109 residues long: Large ribosomal subunit protein uL22 (109 aa).

The protein belongs to the universal ribosomal protein uL22 family. In terms of assembly, part of the 50S ribosomal subunit.

In terms of biological role, this protein binds specifically to 23S rRNA; its binding is stimulated by other ribosomal proteins, e.g. L4, L17, and L20. It is important during the early stages of 50S assembly. It makes multiple contacts with different domains of the 23S rRNA in the assembled 50S subunit and ribosome. Its function is as follows. The globular domain of the protein is located near the polypeptide exit tunnel on the outside of the subunit, while an extended beta-hairpin is found that lines the wall of the exit tunnel in the center of the 70S ribosome. The sequence is that of Large ribosomal subunit protein uL22 from Bordetella petrii (strain ATCC BAA-461 / DSM 12804 / CCUG 43448).